The sequence spans 223 residues: Probable transaldolase (223 aa).

Lysine 91 acts as the Schiff-base intermediate with substrate in catalysis.

This sequence belongs to the transaldolase family. Type 3B subfamily.

It localises to the cytoplasm. The catalysed reaction is D-sedoheptulose 7-phosphate + D-glyceraldehyde 3-phosphate = D-erythrose 4-phosphate + beta-D-fructose 6-phosphate. The protein operates within carbohydrate degradation; pentose phosphate pathway; D-glyceraldehyde 3-phosphate and beta-D-fructose 6-phosphate from D-ribose 5-phosphate and D-xylulose 5-phosphate (non-oxidative stage): step 2/3. Its function is as follows. Transaldolase is important for the balance of metabolites in the pentose-phosphate pathway. The polypeptide is Probable transaldolase (Prosthecochloris aestuarii (strain DSM 271 / SK 413)).